The chain runs to 161 residues: Cytochrome c-type biogenesis protein CcmE (161 aa).

At Met-1 to Arg-8 the chain is on the cytoplasmic side. The helical; Signal-anchor for type II membrane protein transmembrane segment at Leu-9–Ala-29 threads the bilayer. Residues Leu-30–Gln-161 are Periplasmic-facing. His-129 and Tyr-133 together coordinate heme. The disordered stretch occupies residues Met-142–Gln-161. Residues Tyr-151–Gln-161 show a composition bias toward polar residues.

The protein belongs to the CcmE/CycJ family.

It localises to the cell inner membrane. Its function is as follows. Heme chaperone required for the biogenesis of c-type cytochromes. Transiently binds heme delivered by CcmC and transfers the heme to apo-cytochromes in a process facilitated by CcmF and CcmH. This Aliivibrio fischeri (strain ATCC 700601 / ES114) (Vibrio fischeri) protein is Cytochrome c-type biogenesis protein CcmE.